The primary structure comprises 361 residues: Histidinol-phosphate aminotransferase (361 aa).

Lys-224 carries the N6-(pyridoxal phosphate)lysine modification.

The protein belongs to the class-II pyridoxal-phosphate-dependent aminotransferase family. Histidinol-phosphate aminotransferase subfamily. In terms of assembly, homodimer. The cofactor is pyridoxal 5'-phosphate.

The catalysed reaction is L-histidinol phosphate + 2-oxoglutarate = 3-(imidazol-4-yl)-2-oxopropyl phosphate + L-glutamate. It functions in the pathway amino-acid biosynthesis; L-histidine biosynthesis; L-histidine from 5-phospho-alpha-D-ribose 1-diphosphate: step 7/9. The sequence is that of Histidinol-phosphate aminotransferase from Limosilactobacillus fermentum (strain NBRC 3956 / LMG 18251) (Lactobacillus fermentum).